A 359-amino-acid polypeptide reads, in one-letter code: Membrane-bound lytic murein transglycosylase C (359 aa).

The signal sequence occupies residues 1-16 (MKKYLALALIAPLLIS). The N-palmitoyl cysteine moiety is linked to residue cysteine 17. Residue cysteine 17 is the site of S-diacylglycerol cysteine attachment.

It belongs to the transglycosylase Slt family.

It is found in the cell outer membrane. It carries out the reaction Exolytic cleavage of the (1-&gt;4)-beta-glycosidic linkage between N-acetylmuramic acid (MurNAc) and N-acetylglucosamine (GlcNAc) residues in peptidoglycan, from either the reducing or the non-reducing ends of the peptidoglycan chains, with concomitant formation of a 1,6-anhydrobond in the MurNAc residue.. In terms of biological role, murein-degrading enzyme. May play a role in recycling of muropeptides during cell elongation and/or cell division. In Escherichia fergusonii (strain ATCC 35469 / DSM 13698 / CCUG 18766 / IAM 14443 / JCM 21226 / LMG 7866 / NBRC 102419 / NCTC 12128 / CDC 0568-73), this protein is Membrane-bound lytic murein transglycosylase C.